Reading from the N-terminus, the 162-residue chain is Sec-independent protein translocase protein TatB (162 aa).

The helical transmembrane segment at 1 to 21 threads the bilayer; the sequence is MFDLGWTELLVIGVVALIVVG. Disordered regions lie at residues 69–111 and 124–162; these read ATNP…DRAE and AADR…ETKA. 2 stretches are compositionally biased toward basic and acidic residues: residues 83-111 and 124-141; these read ATRD…DRAE and AADR…KAEE. Over residues 144–155 the composition is skewed to low complexity; sequence AALSATPASTAS.

Belongs to the TatB family. As to quaternary structure, the Tat system comprises two distinct complexes: a TatABC complex, containing multiple copies of TatA, TatB and TatC subunits, and a separate TatA complex, containing only TatA subunits. Substrates initially bind to the TatABC complex, which probably triggers association of the separate TatA complex to form the active translocon.

Its subcellular location is the cell inner membrane. Its function is as follows. Part of the twin-arginine translocation (Tat) system that transports large folded proteins containing a characteristic twin-arginine motif in their signal peptide across membranes. Together with TatC, TatB is part of a receptor directly interacting with Tat signal peptides. TatB may form an oligomeric binding site that transiently accommodates folded Tat precursor proteins before their translocation. This is Sec-independent protein translocase protein TatB from Ruegeria sp. (strain TM1040) (Silicibacter sp.).